A 248-amino-acid polypeptide reads, in one-letter code: MSDTVEELVQRAKLAEQAERYDDMAAAMKKVTEQGQELSNEERNLLSVAYKNVVGARRSSWRVISSIEQKTEGSEKKQQLAKEYRVKVEQELNDICQDVLKLLDEFLIVKAGAAESKVFYLKMKGDYYRYLAEVASEDRAAVVEKSQKAYQEALDIAKDKMQPTHPIRLGLALNFSVFYYEILNTPEHACQLAKQAFDDAIAELDTLNEDSYKDSTLIMQLLRDNLTLWTSDVGAEDQEQEGNQEAGN.

This sequence belongs to the 14-3-3 family. As to quaternary structure, interacts with daf-16 and sir-2.1. Interacts with atgl-1. Interacts with hcf-1.

Its subcellular location is the cytoplasm. It localises to the nucleus. Its function is as follows. Required to modulate lifespan, in concert with hcf-1, acting redundantly with 14-3-3-like protein ftt-2. This Caenorhabditis elegans protein is 14-3-3-like protein 1 (par-5).